We begin with the raw amino-acid sequence, 331 residues long: Ketol-acid reductoisomerase (NADP(+)) (331 aa).

The KARI N-terminal Rossmann domain occupies 2–182 (ARMYYDEDAN…GGTRAGVLET (181 aa)). Residues 25–28 (YGSQ), Ser-51, Ser-53, and 83–86 (DEVQ) contribute to the NADP(+) site. The active site involves His-108. Gly-134 contributes to the NADP(+) binding site. The 146-residue stretch at 183 to 328 (TFREETETDL…KDLRAMFSWL (146 aa)) folds into the KARI C-terminal knotted domain. Residues Asp-191, Glu-195, Glu-227, and Glu-231 each contribute to the Mg(2+) site. Residue Ser-252 participates in substrate binding.

Belongs to the ketol-acid reductoisomerase family. Mg(2+) is required as a cofactor.

The enzyme catalyses (2R)-2,3-dihydroxy-3-methylbutanoate + NADP(+) = (2S)-2-acetolactate + NADPH + H(+). It carries out the reaction (2R,3R)-2,3-dihydroxy-3-methylpentanoate + NADP(+) = (S)-2-ethyl-2-hydroxy-3-oxobutanoate + NADPH + H(+). Its pathway is amino-acid biosynthesis; L-isoleucine biosynthesis; L-isoleucine from 2-oxobutanoate: step 2/4. It functions in the pathway amino-acid biosynthesis; L-valine biosynthesis; L-valine from pyruvate: step 2/4. Involved in the biosynthesis of branched-chain amino acids (BCAA). Catalyzes an alkyl-migration followed by a ketol-acid reduction of (S)-2-acetolactate (S2AL) to yield (R)-2,3-dihydroxy-isovalerate. In the isomerase reaction, S2AL is rearranged via a Mg-dependent methyl migration to produce 3-hydroxy-3-methyl-2-ketobutyrate (HMKB). In the reductase reaction, this 2-ketoacid undergoes a metal-dependent reduction by NADPH to yield (R)-2,3-dihydroxy-isovalerate. This is Ketol-acid reductoisomerase (NADP(+)) from Nostoc punctiforme (strain ATCC 29133 / PCC 73102).